A 66-amino-acid polypeptide reads, in one-letter code: Large ribosomal subunit protein bL35 (66 aa).

Positions 1–16 are enriched in basic residues; it reads MPKQKTHRASAKRFKR. The tract at residues 1–22 is disordered; sequence MPKQKTHRASAKRFKRTGSGGL.

It belongs to the bacterial ribosomal protein bL35 family.

This Streptococcus suis (strain 05ZYH33) protein is Large ribosomal subunit protein bL35.